Consider the following 469-residue polypeptide: Spliceosome-associated protein CWC27 homolog (469 aa).

Ser2 carries the post-translational modification N-acetylserine. In terms of domain architecture, PPIase cyclophilin-type spans 11–166 (TNGKVLLKTT…NPHRIKSCEV (156 aa)). Over residues 175–193 (TPREIKKPKNEKPEEEVKK) the composition is skewed to basic and acidic residues. Disordered regions lie at residues 175 to 415 (TPRE…DDEG) and 428 to 469 (RKVK…KERR). Residues 206 to 229 (SFGEEAEEEEEEVNRVSQSMKGRS) are a coiled coil. The span at 231–241 (SSHDLLKDDPH) shows a compositional bias: basic and acidic residues. A compositionally biased stretch (acidic residues) spans 256 to 278 (TGDLEDDGEDDSAERDEYMEDDE). Basic and acidic residues-rich tracts occupy residues 302-341 (GDGE…KVEE) and 356-368 (EYRR…EALR). The stretch at 309-371 (ASRSEELRKE…QKYEALRKQQ (63 aa)) forms a coiled coil. The span at 384–403 (ALLSQFKSKLTQAITETPEN) shows a compositional bias: polar residues. Positions 454-469 (RREESKKLLREKKERR) are enriched in basic and acidic residues.

It belongs to the cyclophilin-type PPIase family. In terms of assembly, part of the activated spliceosome B/catalytic step 1 spliceosome, one of the forms of the spliceosome which has a well-formed active site but still cannot catalyze the branching reaction and is composed at least of 52 proteins, the U2, U5 and U6 snRNAs and the pre-mRNA. Recruited during early steps of activated spliceosome B maturation, it is probably one of the first proteins released from this complex as he matures to the spliceosome C complex. Component of the minor spliceosome, which splices U12-type introns.

Its subcellular location is the nucleus. In terms of biological role, as part of the spliceosome, plays a role in pre-mRNA splicing. Probable inactive PPIase with no peptidyl-prolyl cis-trans isomerase activity. As a component of the minor spliceosome, involved in the splicing of U12-type introns in pre-mRNAs. The chain is Spliceosome-associated protein CWC27 homolog from Mus musculus (Mouse).